Consider the following 148-residue polypeptide: MFDVTLLILLGLAALGFISHNTTVAVSILVLIIVRVTPLSTFFPWIEKQGLSIGIIILTIGVMAPIASGTLPPSTLIHSFLNWKSLVAIAVGVIVSWLGGRGVTLMGSQSQLVAGLLVGTVLGVALFRGVPVGPLIAAGLVSLIVGKQ.

4 consecutive transmembrane segments (helical) span residues Ala14–Val34, Leu51–Leu71, Leu86–Met106, and Val121–Val141.

This sequence belongs to the UPF0756 family.

It is found in the cell membrane. The sequence is that of UPF0756 membrane protein YeaL from Escherichia coli (strain B / REL606).